The chain runs to 1315 residues: Claspin (1315 aa).

Disordered stretches follow at residues 22 to 276 (EAAD…AARL) and 345 to 474 (PADA…EQKT). Phosphoserine occurs at positions 26, 42, 46, 53, 65, and 67. Over residues 65–74 (SDSEAEDRDD) the composition is skewed to acidic residues. Polar residues predominate over residues 91–101 (NLHSGKSQSRS). The segment covering 108-118 (DSDESDMEETP) has biased composition (acidic residues). Residues Ser109, Ser112, and Ser119 each carry the phosphoserine modification. Polar residues predominate over residues 119–128 (SQESPETQEA). Composition is skewed to basic and acidic residues over residues 153–178 (LLREGAEGKAKSKRRLEKEERTMEKI) and 186–197 (TRCEESDADRPL). The stretch at 159-187 (EGKAKSKRRLEKEERTMEKIRRLKKKETR) forms a coiled coil. Over residues 205 to 228 (EDSDLFETGLEEENDSALEDEESL) the composition is skewed to acidic residues. Phosphoserine is present on Ser220. Positions 235 to 245 (VKNKVKNRKKK) are enriched in basic residues. Ser255 is subject to Phosphoserine. 2 stretches are compositionally biased toward basic and acidic residues: residues 391–415 (ACGKDPVRRGELEIEETEKHSDDRP) and 455–470 (EELKTVEKTDAKEGMP). Ser522 bears the Phosphoserine mark. Residues 599-626 (EKLQMLKAKLQEAMKLRRLEERQKRQAL) are a coiled coil. Positions 625 to 691 (ALFKLDNEDG…SSDIGKSVAL (67 aa)) are disordered. The span at 632 to 657 (EDGFEEEEEEEEMTDESEEDGEEETT) shows a compositional bias: acidic residues. Over residues 669 to 679 (KDEKETDKENT) the composition is skewed to basic and acidic residues. Residues Ser698, Ser701, Ser709, Ser722, and Ser740 each carry the phosphoserine modification. Positions 713–750 (MGYFPTEEKSETDEYLAKQSDKLDEDDSSSLLTKESSH) are disordered. Residues 741-750 (SSLLTKESSH) show a composition bias toward low complexity. Phosphoserine occurs at positions 785, 787, 810, 816, and 823. An N6-acetyllysine modification is found at Lys868. CKB motif repeat units lie at residues 887-896 (ELLDLCTGQF) and 917-926 (ELLNLCSGKF). Thr893 is modified (phosphothreonine; by CHEK1). 2 disordered regions span residues 924–1002 (GKFP…NDEE) and 1032–1052 (EDEAEVSGSDVGSEDEYDGEE). Phosphoserine is present on Ser932. One copy of the CKB motif 3 repeat lies at 954-963 (EALALCSGSF). The segment at 966–1063 (DREEEGEEEE…DEYEEDVIDE (98 aa)) is acidic patch. Composition is skewed to acidic residues over residues 967–977 (REEEGEEEEFG), 990–1002 (SDEDEHSDSNDEE), and 1043–1052 (GSEDEYDGEE). A phosphoserine mark is found at Ser990, Ser996, and Ser998. Positions 1001–1036 (EELALDLEDDEEELLKQSEKMKRQMRLKKYLEDEAE) form a coiled coil. A phosphoserine mark is found at Ser1133 and Ser1265. Positions 1264–1315 (LSPTKAEAAKDSSKPQVRRRGLSSMMSPSPKRLKTNGSSPGPKRSIFRYLES) are disordered.

It belongs to the claspin family. As to quaternary structure, interacts (phosphorylation-dependent) with CHEK1; regulates CLSPN function in checkpoint for DNA damage and replication. Interacts with ATR and RAD9A and these interactions are slightly reduced during checkpoint activation. Interacts with BRCA1 and this interaction increases during checkpoint activation. Interacts with TIMELESS; the interaction is required for leading-strand replication. Associates with the MCM2-7 complex and other replisome factors. Interacts (via the acidic patch) with CDC7; the interaction is required for phosphorylation of MCM proteins and CLASPIN by CDC7. Interacts with PCNA. Interacts with FZR1. In terms of processing, phosphorylated. Undergoes ATR-dependent phosphorylation by CHEK1 during activation of DNA replication or damage checkpoints. Phosphorylation by CSNK1G1/CK1 promotes CHEK1 binding. Phosphorylated by CDC7 during DNA replication, phosphorylation inhibits interaction between the acidic patch and N-terminal segments leading to increased binding to DNA and PCNA. Post-translationally, ubiquitinated by the anaphase promoting complex/cyclosome (APC/C) during G1 phase, leading to its degradation by the proteasome. Ubiquitination is mediated via its interaction with FZR1/CDH1. Following DNA damage, it is deubiquitinated by USP28 in G2 phase, preventing its degradation. Proteolytically cleaved by caspase-7 (CASP7) in response to apoptosis, leading to its inactivation.

It localises to the nucleus. In terms of biological role, required for checkpoint mediated cell cycle arrest in response to inhibition of DNA replication or to DNA damage induced by both ionizing and UV irradiation. Adapter protein which binds to BRCA1 and the checkpoint kinase CHEK1 and facilitates the ATR-dependent phosphorylation of both proteins. Also required to maintain normal rates of replication fork progression during unperturbed DNA replication. Binds directly to DNA, with particular affinity for branched or forked molecules and interacts with multiple protein components of the replisome such as the MCM2-7 complex and TIMELESS. Important for initiation of DNA replication, recruits kinase CDC7 to phosphorylate MCM2-7 components. This Mus musculus (Mouse) protein is Claspin (Clspn).